The sequence spans 238 residues: Inactive glycoside hydrolase XLP1 (238 aa).

An N-terminal signal peptide occupies residues 1-19; it reads MKSFLIAIVIAVLLPVSAA. The active site involves glutamate 133. N-linked (GlcNAc...) asparagine glycosylation is found at asparagine 171 and asparagine 187. The active site involves glutamate 219.

The protein belongs to the glycosyl hydrolase 12 (cellulase H) family. Interacts with host apoplastic glucanase inhibitor GIP2.

It is found in the secreted. Functionally, non-functional secreted XEG1-like protein that binds to host Nicotiana benthamiana apoplastic glucanase inhibitor protein GIP2 more tightly than does XEG1, thus it outcompetes XEG1 for GIP2 binding and frees functional XEG1 to support P.parasitica infection. With XEG1, is required to elevate apoplastic sugar during P.parasitica infection. The protein is Inactive glycoside hydrolase XLP1 of Phytophthora nicotianae (strain INRA-310) (Phytophthora parasitica).